We begin with the raw amino-acid sequence, 221 residues long: UPF0502 protein XOO0224 (221 aa).

Belongs to the UPF0502 family.

This is UPF0502 protein XOO0224 from Xanthomonas oryzae pv. oryzae (strain MAFF 311018).